A 578-amino-acid polypeptide reads, in one-letter code: Ketol-acid reductoisomerase, chloroplastic (578 aa).

A chloroplast-targeting transit peptide spans Met-1–Thr-52. A KARI N-terminal Rossmann domain is found at Val-90 to Thr-288. NADP(+)-binding positions include Gly-111 to Gln-118, Arg-144 to Ser-149, and Ser-183 to Gln-187. His-208 is an active-site residue. KARI C-terminal knotted domains lie at Thr-289–Asn-437 and Asp-438–Leu-574. Positions 297, 301, 474, and 478 each coordinate Mg(2+). Ser-500 is a substrate binding site.

This sequence belongs to the ketol-acid reductoisomerase family. As to quaternary structure, homodimer. It depends on Mg(2+) as a cofactor.

The protein resides in the plastid. It is found in the chloroplast. The enzyme catalyses (2R)-2,3-dihydroxy-3-methylbutanoate + NADP(+) = (2S)-2-acetolactate + NADPH + H(+). The catalysed reaction is (2R,3R)-2,3-dihydroxy-3-methylpentanoate + NADP(+) = (S)-2-ethyl-2-hydroxy-3-oxobutanoate + NADPH + H(+). It participates in amino-acid biosynthesis; L-isoleucine biosynthesis; L-isoleucine from 2-oxobutanoate: step 2/4. The protein operates within amino-acid biosynthesis; L-valine biosynthesis; L-valine from pyruvate: step 2/4. The protein is Ketol-acid reductoisomerase, chloroplastic of Oryza sativa subsp. japonica (Rice).